The following is a 465-amino-acid chain: Cerebellar degeneration-related protein 2-like (465 aa).

Coiled-coil stretches lie at residues 38–143 (LLER…EQLR) and 188–265 (LEQE…TYLL). A disordered region spans residues 282 to 314 (APEADDPQPGRGDDLGAQDGVSSPAASPGHVVR). Residues serine 308, serine 318, and serine 344 each carry the phosphoserine modification. Positions 350–377 (MSILREVDEQYHALLEKYEELLSKCRQH) form a coiled coil. A disordered region spans residues 382–417 (RHAGVQTSRPISRDSSWRDLRGGEEGQGEVKAGEKS). Over residues 392-405 (ISRDSSWRDLRGGE) the composition is skewed to basic and acidic residues.

This sequence belongs to the CDR2 family.

The protein is Cerebellar degeneration-related protein 2-like (CDR2L) of Homo sapiens (Human).